Reading from the N-terminus, the 168-residue chain is G/U mismatch-specific DNA glycosylase (168 aa).

It belongs to the uracil-DNA glycosylase (UDG) superfamily. TDG/mug family. In terms of assembly, binds DNA as a monomer.

It localises to the cytoplasm. The catalysed reaction is Specifically hydrolyzes mismatched double-stranded DNA and polynucleotides, releasing free uracil.. In terms of biological role, excises ethenocytosine and uracil, which can arise by alkylation or deamination of cytosine, respectively, from the corresponding mispairs with guanine in ds-DNA. It is capable of hydrolyzing the carbon-nitrogen bond between the sugar-phosphate backbone of the DNA and the mispaired base. The complementary strand guanine functions in substrate recognition. Required for DNA damage lesion repair in stationary-phase cells. This chain is G/U mismatch-specific DNA glycosylase, found in Salmonella choleraesuis (strain SC-B67).